The chain runs to 272 residues: N-acetylmuramoyl-L-alanine amidase CwlA (272 aa).

In terms of domain architecture, N-acetylmuramoyl-L-alanine amidase spans 24–142; that stretch reads KAEYITIHNT…QDWNGKYCPH (119 aa).

The protein belongs to the N-acetylmuramoyl-L-alanine amidase 2 family.

The enzyme catalyses Hydrolyzes the link between N-acetylmuramoyl residues and L-amino acid residues in certain cell-wall glycopeptides.. Autolysins are involved in some important biological processes such as cell separation, cell-wall turnover, competence for genetic transformation, formation of the flagella and sporulation. The chain is N-acetylmuramoyl-L-alanine amidase CwlA (cwlA) from Bacillus subtilis (strain 168).